A 675-amino-acid polypeptide reads, in one-letter code: Calcium channel YVC1 (675 aa).

Residues 1–236 (MVSANGDLHL…PVRLKAPVYQ (236 aa)) are Cytoplasmic-facing. Residues 237–257 (NYLQMIFSFLFLGLYTLVVNG) form a helical membrane-spanning segment. At 258–295 (KDSERVQSFDLLESIFYVFNTGFILDELTKLYYIGYAH) the chain is on the vacuolar side. Residues 296-316 (LSFWNLFNDTTYLIITFAMGF) traverse the membrane as a helical segment. Over 317 to 335 (RAMSVTPLNAKYSSEDWDK) the chain is Cytoplasmic. A helical membrane pass occupies residues 336–355 (ISYRVLSCAAPFVWSRLLLY). At 356 to 376 (LESQRFIGIMLVILKHMMKES) the chain is on the vacuolar side. The chain crosses the membrane as a helical span at residues 377 to 397 (IVFFFLLFLIMIGFTQGFLGL). Over 398–405 (DSADGKRD) the chain is Cytoplasmic. A helical transmembrane segment spans residues 406–426 (ITGPILGNLTITVLGLGSFDV). The Vacuolar segment spans residues 427 to 436 (FEEFAPPYAA). A helical transmembrane segment spans residues 437–457 (ILYYGYYFIVSVILLNILIAL). Over 458-675 (YSTAYQKVID…EKLDIKDKKE (218 aa)) the chain is Cytoplasmic. Threonine 636 bears the Phosphothreonine mark.

This sequence belongs to the transient receptor (TC 1.A.4) family.

Its subcellular location is the vacuole membrane. Functionally, required for release of calcium ions from the vacuole in response to hyperosmotic shock. This is Calcium channel YVC1 from Saccharomyces cerevisiae (strain ATCC 204508 / S288c) (Baker's yeast).